A 609-amino-acid chain; its full sequence is Chaperone protein DnaK (609 aa).

The residue at position 173 (Thr-173) is a Phosphothreonine; by autocatalysis. Residues 525–542 (ENISDEDKKNAEEKKDAL) show a composition bias toward basic and acidic residues. Disordered regions lie at residues 525–554 (ENISDEDKKNAEEKKDALKTALEGEDIDDI) and 574–609 (EQAQQAQQQGQEEQGSQDSTVEDADFKEVKDDEDKK). Residues 574-587 (EQAQQAQQQGQEEQ) are compositionally biased toward low complexity. Over residues 597-609 (ADFKEVKDDEDKK) the composition is skewed to basic and acidic residues.

This sequence belongs to the heat shock protein 70 family.

Its function is as follows. Acts as a chaperone. The polypeptide is Chaperone protein DnaK (Staphylococcus epidermidis (strain ATCC 35984 / DSM 28319 / BCRC 17069 / CCUG 31568 / BM 3577 / RP62A)).